The sequence spans 414 residues: DNA polymerase IV (414 aa).

The UmuC domain maps to 8 to 189; that stretch reads IFHIDMNSFY…LPIEEMHGIG (182 aa). Mg(2+) contacts are provided by Asp-12 and Asp-108. The active site involves Glu-109. A disordered region spans residues 394–414; sequence EESKTRGTSFNRDFFQDEKKR.

It belongs to the DNA polymerase type-Y family. As to quaternary structure, monomer. It depends on Mg(2+) as a cofactor.

It is found in the cytoplasm. It catalyses the reaction DNA(n) + a 2'-deoxyribonucleoside 5'-triphosphate = DNA(n+1) + diphosphate. Poorly processive, error-prone DNA polymerase involved in untargeted mutagenesis. Copies undamaged DNA at stalled replication forks, which arise in vivo from mismatched or misaligned primer ends. These misaligned primers can be extended by PolIV. Exhibits no 3'-5' exonuclease (proofreading) activity. May be involved in translesional synthesis, in conjunction with the beta clamp from PolIII. The sequence is that of DNA polymerase IV from Bacillus velezensis (strain DSM 23117 / BGSC 10A6 / LMG 26770 / FZB42) (Bacillus amyloliquefaciens subsp. plantarum).